The following is a 431-amino-acid chain: Fumarylacetoacetase fahA (431 aa).

Position 133 (D133) interacts with Ca(2+). Substrate is bound at residue Y135. H140 (proton acceptor) is an active-site residue. R149 is a substrate binding site. 3 residues coordinate Ca(2+): E209, E211, and D243. Residue D243 coordinates Mg(2+). Residues Q250 and Y254 each contribute to the substrate site. Positions 263 and 267 each coordinate Mg(2+). A substrate-binding site is contributed by T362. Residues 362–381 (TISGKENQTQGSLLEQTNGK) are compositionally biased toward polar residues. The disordered stretch occupies residues 362 to 382 (TISGKENQTQGSLLEQTNGKN).

Belongs to the FAH family. The cofactor is Ca(2+). Mg(2+) serves as cofactor.

The catalysed reaction is 4-fumarylacetoacetate + H2O = acetoacetate + fumarate + H(+). Its pathway is amino-acid degradation; L-phenylalanine degradation; acetoacetate and fumarate from L-phenylalanine: step 6/6. Its function is as follows. Fumarylacetoacetase; part of the L-tyrosine degradation gene cluster that mediates the biosynthesis of the brownish pigment pyomelanin as an alternative melanin. The 4-hydroxyphenylpyruvate dioxygenase hppD catalyzes the conversion of 4-hydroxyphenylpyruvate to homogentisic acid (HGA). The protein hmgX is crucial for this conversion and thus, probably functions as an accessory factor to mediate specific activity of hppD. The homogentisate 1,2-dioxygenase hmgA is then involved in the cleavage of the aromatic ring of HGA and its conversion to 4-maleylacetoacetate. When hmgA activity is lowered by the cell wall integrity (CWI) signaling pathway, HGA accumulates and leads to the production of pyomelanin through benzoquinone acetic acid after oxidation and polymerization. On the opposite, in non-stress conditions, both hppD and hmgA activities are balanced and HGA is degraded into 4-maleylacetoacetate. 4-maleylacetoacetate is further converted to 4-fumarylacetoacetate by the maleylacetoacetate isomerase maiA, which is degraded into fumarate and acetoacetate by the fumarylacetoacetase fahA. The chain is Fumarylacetoacetase fahA from Aspergillus fumigatus (strain ATCC MYA-4609 / CBS 101355 / FGSC A1100 / Af293) (Neosartorya fumigata).